Reading from the N-terminus, the 883-residue chain is Chromatin structure-remodeling complex protein RSC30 (883 aa).

The segment at residues 14 to 45 is a DNA-binding region (zn(2)-C6 fungal-type); the sequence is ACTQCRKRKIGCDRAKPICGNCVKYNKPDCFY. 2 disordered regions span residues 121 to 157 and 241 to 273; these read QNNN…DVPS and NTTA…TSRT. The segment covering 130–149 has biased composition (polar residues); the sequence is APRQNSSTVSSNVHGNTIVR. Phosphoserine is present on serine 150. Positions 241–251 are enriched in polar residues; sequence NTTANKINKTG. The segment covering 252–270 has biased composition (basic and acidic residues); the sequence is ENSKKGKVDGKRAGFDHQT.

Forms a heteromer with RSC3. Interacts with NPL6. Component of the two forms of the RSC complex composed of at least either RSC1 or RSC2, and ARP7, ARP9, LDB7, NPL6, RSC3, RSC30, RSC4, RSC58, RSC6, RSC8, RSC9, SFH1, STH1, HTL1 and probably RTT102. The complexes interact with histone and histone variant components of centromeric chromatin. Component of a fungal-specific module (HTL1-LDB7-NPL6-RSC3-RSC30) within the RSC complex.

It localises to the nucleus. Functionally, component of the chromatin structure-remodeling complex (RSC), which is involved in transcription regulation and nucleosome positioning. RSC is responsible for the transfer of a histone octamer from a nucleosome core particle to naked DNA. The reaction requires ATP and involves an activated RSC-nucleosome intermediate. Remodeling reaction also involves DNA translocation, DNA twist and conformational change. As a reconfigurer of centromeric and flanking nucleosomes, RSC complex is required both for proper kinetochore function in chromosome segregation and, via a PKC1-dependent signaling pathway, for organization of the cellular cytoskeleton. This subunit is required for transcription of ribosomal protein genes and genes involved in the integrity of the cell wall. Together with HTL1, LDB7, NPL6, RSC3 components, defines a fungal-specific module within the RSC complex that plays a role in many cellular functions including the maintenance of cell wall integrity. This chain is Chromatin structure-remodeling complex protein RSC30 (RSC30), found in Saccharomyces cerevisiae (strain ATCC 204508 / S288c) (Baker's yeast).